We begin with the raw amino-acid sequence, 89 residues long: Endoribonuclease VapD 1 (89 aa).

It belongs to the VapD ribonuclease family. In terms of assembly, homodimer.

Its function is as follows. Cleaves ssRNA, mostly between U:A. In Riemerella anatipestifer (Moraxella anatipestifer), this protein is Endoribonuclease VapD 1.